The chain runs to 558 residues: Glucose-6-phosphate isomerase (558 aa).

The residue at position 2 (Ala-2) is an N-acetylalanine. Lys-12 carries the post-translational modification N6-acetyllysine. An N6-(2-hydroxyisobutyryl)lysine modification is found at Lys-34. Ser-107 bears the Phosphoserine mark. Thr-109 is subject to Phosphothreonine. Lys-142 is subject to N6-acetyllysine. 159-160 (GS) is a binding site for D-glucose 6-phosphate. Ser-185 is modified (phosphoserine; by CK2). 210–215 (SKTFTT) contributes to the D-glucose 6-phosphate binding site. The residue at position 250 (Thr-250) is a Phosphothreonine. Residues Gln-354, Glu-358, and His-389 each coordinate D-glucose 6-phosphate. Catalysis depends on Glu-358, which acts as the Proton donor. The active site involves His-389. At Lys-454 the chain carries N6-acetyllysine; alternate. Lys-454 carries the N6-malonyllysine; alternate modification. Lys-454 is modified (N6-succinyllysine; alternate). Ser-455 is subject to Phosphoserine. Lys-519 is a binding site for D-glucose 6-phosphate. The active site involves Lys-519.

It belongs to the GPI family. As to quaternary structure, homodimer in the catalytically active form, monomer in the secreted form. In terms of processing, phosphorylation at Ser-185 by CK2 has been shown to decrease enzymatic activity and may contribute to secretion by a non-classical secretory pathway. ISGylated.

Its subcellular location is the cytoplasm. The protein localises to the secreted. It carries out the reaction alpha-D-glucose 6-phosphate = beta-D-fructose 6-phosphate. Its pathway is carbohydrate degradation; glycolysis; D-glyceraldehyde 3-phosphate and glycerone phosphate from D-glucose: step 2/4. Functionally, in the cytoplasm, catalyzes the conversion of glucose-6-phosphate to fructose-6-phosphate, the second step in glycolysis, and the reverse reaction during gluconeogenesis. Besides it's role as a glycolytic enzyme, also acts as a secreted cytokine: acts as an angiogenic factor (AMF) that stimulates endothelial cell motility. Acts as a neurotrophic factor, neuroleukin, for spinal and sensory neurons. It is secreted by lectin-stimulated T-cells and induces immunoglobulin secretion. This chain is Glucose-6-phosphate isomerase, found in Sus scrofa (Pig).